A 285-amino-acid chain; its full sequence is K88 fimbrial protein AD (285 aa).

A signal peptide spans 1-21 (MKKTLIALAIAASAASGMAHA).

This sequence belongs to the fimbrial K88 protein family. K88 fimbria, 0.1-1 micrometer in length and 7 nanometers in diameter, is composed of about 100 identical subunits.

The protein resides in the fimbrium. K88 major fimbrial subunit. Fimbriae (also called pili), are polar filaments radiating from the surface of the bacterium to a length of 0.5-1.5 micrometers and numbering 100-300 per cell. They enable bacteria to colonize the epithelium of specific host organs. This chain is K88 fimbrial protein AD (faeG), found in Escherichia coli.